The primary structure comprises 454 residues: tRNA modification GTPase MnmE (454 aa).

Positions 23, 80, and 120 each coordinate (6S)-5-formyl-5,6,7,8-tetrahydrofolate. The region spanning Gly-216–Gly-377 is the TrmE-type G domain. Asn-226 is a K(+) binding site. GTP-binding positions include Asn-226–Ser-231, Thr-245–Thr-251, and Asp-270–Gly-273. Residue Ser-230 coordinates Mg(2+). K(+)-binding residues include Thr-245, Ile-247, and Thr-250. Residue Thr-251 participates in Mg(2+) binding. Lys-454 contributes to the (6S)-5-formyl-5,6,7,8-tetrahydrofolate binding site.

The protein belongs to the TRAFAC class TrmE-Era-EngA-EngB-Septin-like GTPase superfamily. TrmE GTPase family. As to quaternary structure, homodimer. Heterotetramer of two MnmE and two MnmG subunits. Requires K(+) as cofactor.

Its subcellular location is the cytoplasm. Its function is as follows. Exhibits a very high intrinsic GTPase hydrolysis rate. Involved in the addition of a carboxymethylaminomethyl (cmnm) group at the wobble position (U34) of certain tRNAs, forming tRNA-cmnm(5)s(2)U34. In Mannheimia succiniciproducens (strain KCTC 0769BP / MBEL55E), this protein is tRNA modification GTPase MnmE.